The following is a 354-amino-acid chain: MAWLQPTLCRKELESRQTSGLDAAMKAAGKKYFGTALTVRNDAGETNVLNTKGEFGSITPENAMKWEAIQPNRGQFNWGPADQHANAATQRGMELRCHTLVWHSQLPSWVANGNWNNQTLQQVMKDHINAVMGRYKGKCTHWDVVNEALNEDGTYRDSVFYRVIGEAFIPIAFRMVLAADPTTKLYYNDYNLEYGGAKTAGAIRITKLIQSYGLRIDGVGLQAHMTSESTPTQSTVTPSRANLASVLNSFTKLNVDVAYTELDIRMNTPANQQKLQANAAAYARMVGSCMDVKRCVGVTVWGISDKYSWVPGTFPGEGSALLWDDNFNKKPSYTSSLNTIRACWKCHRLLVSIS.

Residues 19–339 form the GH10 domain; it reads SGLDAAMKAA…KPSYTSSLNT (321 aa). An N-linked (GlcNAc...) asparagine glycan is attached at Asn-117. Glu-147 acts as the Proton donor in catalysis. Glu-261 (nucleophile) is an active-site residue. A disulfide bridge connects residues Cys-289 and Cys-295.

It belongs to the glycosyl hydrolase 10 (cellulase F) family.

Its subcellular location is the secreted. It carries out the reaction Endohydrolysis of (1-&gt;4)-beta-D-xylosidic linkages in xylans.. It participates in glycan degradation; xylan degradation. Functionally, endo-1,4-beta-xylanase involved in the hydrolysis of xylan, a major structural heterogeneous polysaccharide found in plant biomass representing the second most abundant polysaccharide in the biosphere, after cellulose. Plays an important role in causing fusarium head blight (FHB) on cereal crops. This Gibberella zeae (strain ATCC MYA-4620 / CBS 123657 / FGSC 9075 / NRRL 31084 / PH-1) (Wheat head blight fungus) protein is Endo-1,4-beta-xylanase 1 (XYL1).